Reading from the N-terminus, the 207-residue chain is LexA repressor (207 aa).

The segment at residues 28–48 (VREIGEAVGLASSSTVHGHLS) is a DNA-binding region (H-T-H motif). Catalysis depends on for autocatalytic cleavage activity residues Ser-130 and Lys-168.

It belongs to the peptidase S24 family. As to quaternary structure, homodimer.

It catalyses the reaction Hydrolysis of Ala-|-Gly bond in repressor LexA.. In terms of biological role, represses a number of genes involved in the response to DNA damage (SOS response), including recA and lexA. In the presence of single-stranded DNA, RecA interacts with LexA causing an autocatalytic cleavage which disrupts the DNA-binding part of LexA, leading to derepression of the SOS regulon and eventually DNA repair. The protein is LexA repressor of Staphylococcus haemolyticus (strain JCSC1435).